A 126-amino-acid chain; its full sequence is MSDSRYKVDVSVVTRFLAEQSQPEQNRFAFAYTITVHNNGELPAKLLSRHWIITDGDGHVEEVRGEGVVGQQPLIKVGQSHTYSSGTVMTTQVGNMQGSYQMLAEDGKRFDAVIEPFRLAVPGSLH.

Positions serine 2–histidine 126 constitute an ApaG domain.

In Pseudomonas syringae pv. tomato (strain ATCC BAA-871 / DC3000), this protein is Protein ApaG.